The chain runs to 1576 residues: Disco-interacting protein 2 homolog B (1576 aa).

Serine 9, serine 50, and serine 53 each carry phosphoserine. The DMAP1-binding domain maps to 12-131 (AVAALPPEVR…PMPTKRRSTF (120 aa)). Residues 31–167 (LSEGDITQKG…AALSAALQQS (137 aa)) form a disordered region. A compositionally biased stretch (polar residues) spans 52–62 (YSPQTQETDSA). Residues 70-83 (QTPAPSAAQTSAPS) show a composition bias toward low complexity. Position 71 is a phosphothreonine (threonine 71). The span at 92–104 (GARDERYRSDIHT) shows a compositional bias: basic and acidic residues. Position 100 is a phosphoserine (serine 100). Threonine 140 is modified (phosphothreonine). Phosphoserine occurs at positions 146, 148, and 153. A compositionally biased stretch (low complexity) spans 155-167 (RRQAALSAALQQS). Phosphoserine is present on residues serine 178, serine 193, and serine 203. The disordered stretch occupies residues 179–201 (IQGSSTSSSASSTLSHGEVKGTS). A compositionally biased stretch (low complexity) spans 182–193 (SSTSSSASSTLS). Residues 217–246 (SAPPDVTTTTSSSSSSSSIRPANIDLPPSG) form a disordered region. Low complexity predominate over residues 223-234 (TTTTSSSSSSSS). Serine 259 is subject to Phosphoserine.

It belongs to the DIP2 family. As to quaternary structure, interacts with alpha-tubulin. Moderately expressed in adult brain, placenta, skeletal muscle, heart, kidney, pancreas, lung, spleen and colon. Expression was weaker in adult liver, kidney, spleen, and ovary, and in fetal brain and liver. In the brain, it is expressed in the cerebral cortex; the frontal, parietal, occipital and temporal lobes; the paracentral gyrus; the pons; the corpus callosum and the hippocampus. Highest expression levels in the brain were found in the cerebral cortex and the frontal and parietal lobes.

It is found in the cell projection. Its subcellular location is the dendrite. The protein localises to the axon. It localises to the perikaryon. Its function is as follows. Negatively regulates axonal outgrowth and is essential for normal synaptic transmission. Not required for regulation of axon polarity. Promotes acetylation of alpha-tubulin. The chain is Disco-interacting protein 2 homolog B (DIP2B) from Homo sapiens (Human).